A 260-amino-acid chain; its full sequence is Ubiquinone/menaquinone biosynthesis C-methyltransferase UbiE (260 aa).

S-adenosyl-L-methionine is bound by residues T83, D104, 132–133 (NA), and S149.

The protein belongs to the class I-like SAM-binding methyltransferase superfamily. MenG/UbiE family.

It catalyses the reaction a 2-demethylmenaquinol + S-adenosyl-L-methionine = a menaquinol + S-adenosyl-L-homocysteine + H(+). The catalysed reaction is a 2-methoxy-6-(all-trans-polyprenyl)benzene-1,4-diol + S-adenosyl-L-methionine = a 5-methoxy-2-methyl-3-(all-trans-polyprenyl)benzene-1,4-diol + S-adenosyl-L-homocysteine + H(+). Its pathway is quinol/quinone metabolism; menaquinone biosynthesis; menaquinol from 1,4-dihydroxy-2-naphthoate: step 2/2. The protein operates within cofactor biosynthesis; ubiquinone biosynthesis. Its function is as follows. Methyltransferase required for the conversion of demethylmenaquinol (DMKH2) to menaquinol (MKH2) and the conversion of 2-polyprenyl-6-methoxy-1,4-benzoquinol (DDMQH2) to 2-polyprenyl-3-methyl-6-methoxy-1,4-benzoquinol (DMQH2). This Vibrio vulnificus (strain CMCP6) protein is Ubiquinone/menaquinone biosynthesis C-methyltransferase UbiE.